The chain runs to 331 residues: Serine/threonine-protein phosphatase PP1 isozyme 7 (331 aa).

N-acetylmethionine is present on methionine 1. Aspartate 60, histidine 62, aspartate 88, and asparagine 120 together coordinate Mn(2+). Histidine 121 (proton donor) is an active-site residue. Positions 169 and 244 each coordinate Mn(2+).

This sequence belongs to the PPP phosphatase family. PP-1 subfamily. Requires Mn(2+) as cofactor. Expressed in roots, rosettes and flowers.

It localises to the nucleus. The protein localises to the cytoplasm. It carries out the reaction O-phospho-L-seryl-[protein] + H2O = L-seryl-[protein] + phosphate. It catalyses the reaction O-phospho-L-threonyl-[protein] + H2O = L-threonyl-[protein] + phosphate. With respect to regulation, phosphatase activity is strongly reduced by the protein phosphatase inhibitor 2 (I-2). Its function is as follows. Serine/threonine-protein phosphatase that possesses phosphatase activity toward para-nitrophenyl phosphate (pNPP) in vitro. This chain is Serine/threonine-protein phosphatase PP1 isozyme 7, found in Arabidopsis thaliana (Mouse-ear cress).